A 732-amino-acid chain; its full sequence is Elongation factor 2 (732 aa).

The region spanning 19-260 is the tr-type G domain; that stretch reads ERIRNIGIAA…MVVRHLPSPI (242 aa). Residues 28-35, 94-98, and 148-151 contribute to the GTP site; these read AHIDHGKT, DTPGH, and NKVD. His-597 is modified (diphthamide).

This sequence belongs to the TRAFAC class translation factor GTPase superfamily. Classic translation factor GTPase family. EF-G/EF-2 subfamily.

Its subcellular location is the cytoplasm. Its function is as follows. Catalyzes the GTP-dependent ribosomal translocation step during translation elongation. During this step, the ribosome changes from the pre-translocational (PRE) to the post-translocational (POST) state as the newly formed A-site-bound peptidyl-tRNA and P-site-bound deacylated tRNA move to the P and E sites, respectively. Catalyzes the coordinated movement of the two tRNA molecules, the mRNA and conformational changes in the ribosome. This Pyrococcus furiosus (strain ATCC 43587 / DSM 3638 / JCM 8422 / Vc1) protein is Elongation factor 2 (fusA).